The following is a 2004-amino-acid chain: Histone acetyltransferase KAT6A (2004 aa).

The region spanning 1 to 77 is the SAMD1-like winged helix (WH) domain; the sequence is MVKLANPLYT…LNSYKDPDNP (77 aa). Positions 1-144 are required for activation of RUNX1-1; the sequence is MVKLANPLYT…FGGSAASGFH (144 aa). Residues 52–166 are required for nuclear localization; sequence ELSVKDGTIL…HGRLLKDGPL (115 aa). An H15 domain is found at 95-171; sequence QNVDWNKLIK…KDGPLYRLNT (77 aa). Residues 144–664 are interaction with PML; it reads HQQLRLAIKR…RKGYGRFLID (521 aa). Lys172 is subject to N6-acetyllysine. 2 consecutive PHD-type zinc fingers follow at residues 206–265 and 259–313; these read IPIC…CKTC and CIEC…CRPR. Residues 312–664 are interaction with RUNX1-1; it reads PRKKGRKLLQ…RKGYGRFLID (353 aa). Residues 334–375 form a disordered region; sequence PIGRPKNRLKKQNTVSKGPFSKVRTGPGRGRKRKITLSSQSA. Residues Lys350 and Lys355 each carry the N6-acetyllysine modification. A Phosphothreonine; by PKB/AKT1 modification is found at Thr369. Ser420 is subject to Phosphoserine. The tract at residues 441 to 464 is disordered; sequence KRGNRKSSTSDWPTDNQDGWDGKQ. A compositionally biased stretch (polar residues) spans 446–457; it reads KSSTSDWPTDNQ. At Ser473 the chain carries Phosphoserine. The catalytic stretch occupies residues 488–778; that stretch reads IQEQALQKVG…VDPECLRWTP (291 aa). An MYST-type HAT domain is found at 504–778; it reads PQVRCPSVIE…VDPECLRWTP (275 aa). The mediates interaction with BRPF1, required for histone H3 acetyltransferase activity stretch occupies residues 507 to 810; that stretch reads RCPSVIEFGK…EPQCQERELE (304 aa). Residues 537–562 form a C2HC MYST-type zinc finger; the sequence is LYLCEFCLKYMKSRTILQQHMKKCGW. At Lys604 the chain carries N6-acetyllysine; by autocatalysis. Acetyl-CoA contacts are provided by residues 645 to 649 and 654 to 660; these read SCIMI and QRKGYGR. The active-site Proton donor/acceptor is the Glu680. Ser684 is an acetyl-CoA binding site. Disordered regions lie at residues 785 to 1445, 1461 to 1621, and 1637 to 1721; these read VVSE…AYQD, QADE…MMQQ, and SCVV…MEIP. Phosphoserine occurs at positions 787 and 812. Residues 787 to 803 show a composition bias toward acidic residues; it reads SEEEEEEAEEGENEEPQ. Residue Lys815 is modified to N6-acetyllysine. Basic and acidic residues predominate over residues 817–836; the sequence is VSHENKEQDSYSVESEKKPE. Lys834 is covalently cross-linked (Glycyl lysine isopeptide (Lys-Gly) (interchain with G-Cter in SUMO2)). Residues 864 to 873 are compositionally biased toward basic residues; that stretch reads RRGRWGRKNR. Positions 874–888 are enriched in basic and acidic residues; it reads KTQERFGDKDSKLLL. At Tyr899 the chain carries Phosphotyrosine. Basic and acidic residues-rich tracts occupy residues 931-942 and 953-980; these read GKPDLPKRRLSE and KSPEALKCRLTEGSERLPRRYSEGDRAV. Phosphoserine is present on residues Ser941, Ser954, and Ser974. N6-acetyllysine is present on Lys1007. Residues 1009–1030 show a composition bias toward basic residues; that stretch reads TLKRKKPFLHRRRRVRKRKHHN. The span at 1031 to 1042 shows a compositional bias: low complexity; the sequence is SSVVTETISETT. Composition is skewed to acidic residues over residues 1043 to 1053 and 1065 to 1078; these read EVLDEPFEDSD and FEIDEEEEEEDENE. Residues Ser1089, Ser1090, and Ser1113 each carry the phosphoserine modification. A compositionally biased stretch (acidic residues) spans 1107–1118; sequence EEEDEESDDADD. Over residues 1146–1172 the composition is skewed to basic residues; sequence LKKKKGWPKGKSRKPIHWKKRPGRKPG. Positions 1203–1223 are enriched in basic and acidic residues; the sequence is KIQESEETVEPKEDMPLPEER. Acidic residues predominate over residues 1224-1245; that stretch reads KEEEEMQAEAEEAEEGEEEDAA. Residues 1246–1262 show a composition bias toward low complexity; that stretch reads SSEVPAASPADSSNSPE. Over residues 1275–1287 the composition is skewed to basic and acidic residues; sequence EKPRVSEEQRQSE. Residues 1288 to 1305 show a composition bias toward acidic residues; sequence EEQQELEEPEPEEEEDAA. Composition is skewed to basic and acidic residues over residues 1323 to 1345, 1358 to 1367, and 1398 to 1420; these read HLESTKKKELEEQPTREDVKEEP, KSREKIKDKE, and EDSHTKEELIELKEEEEIPHSEL. Lys1342 participates in a covalent cross-link: Glycyl lysine isopeptide (Lys-Gly) (interchain with G-Cter in SUMO2). A compositionally biased stretch (low complexity) spans 1481–1503; that stretch reads SPISSVQSHPSQSVRSVSSPNVP. The segment covering 1508–1529 has biased composition (polar residues); sequence GYTQISPEQGSLSAPSMQNMET. Residues 1517-1642 are interaction with RUNX1-2; sequence GSLSAPSMQN…KSPQSCVVER (126 aa). The segment at 1517 to 1741 is interaction with PML; it reads GSLSAPSMQN…YERIPGDFGA (225 aa). Residues 1534–1548 show a composition bias toward low complexity; the sequence is DVPSVSDHSQQVVDS. Residues 1556–1573 are compositionally biased toward polar residues; it reads IESTTENYENPSSYDSTM. Residues 1574-1621 are compositionally biased toward low complexity; sequence GGSICGNSSSQSSCSYGGLSSSSSLTQSSCVVTQQMASMGSSCSMMQQ. A compositionally biased stretch (pro residues) spans 1650 to 1699; sequence QPPPPPPQQPQPPPPQPQPAPQPPPPQQQPQQQPQPQPQQPPPPPPPQQQ. The segment covering 1702 to 1712 has biased composition (polar residues); the sequence is LSQCSMNNSFT. The interval 1913–1948 is required for activation of RUNX1-2; it reads SMNMNTLNAMNSYRMTQPMMNSSYHSNPAYMNQTAQ.

The protein belongs to the MYST (SAS/MOZ) family. As to quaternary structure, component of the MOZ/MORF complex composed at least of ING5, KAT6A, KAT6B, MEAF6 and one of BRPF1, BRD1/BRPF2 and BRPF3. Interacts with RUNX1; phosphorylation of RUNX1 enhances the interaction. Interacts with RUNX2. Interacts with p53/TP53. Interacts with PML (isoform PML-4) and this interaction positively regulates its acetylation activity towards p53/TP53. In terms of processing, autoacetylation at Lys-604 is required for proper function. Autoacetylated. Phosphorylation at Thr-369 by PKB/AKT1 inhibits its interaction with PML and negatively regulates its acetylation activity towards p53/TP53.

The protein localises to the nucleus. Its subcellular location is the nucleolus. It is found in the nucleoplasm. The protein resides in the PML body. It catalyses the reaction L-lysyl-[protein] + acetyl-CoA = N(6)-acetyl-L-lysyl-[protein] + CoA + H(+). In terms of biological role, histone acetyltransferase that acetylates lysine residues in histone H3 and histone H4 (in vitro). Component of the MOZ/MORF complex which has a histone H3 acetyltransferase activity. May act as a transcriptional coactivator for RUNX1 and RUNX2. Acetylates p53/TP53 at 'Lys-120' and 'Lys-382' and controls its transcriptional activity via association with PML. This is Histone acetyltransferase KAT6A (KAT6A) from Homo sapiens (Human).